Reading from the N-terminus, the 337-residue chain is Glyceraldehyde-3-phosphate dehydrogenase 1 (337 aa).

NAD(+) is bound by residues 11–12, aspartate 33, and arginine 78; that span reads RI. D-glyceraldehyde 3-phosphate contacts are provided by residues 149 to 151, threonine 180, 209 to 210, and arginine 232; these read SCT and TG. Cysteine 150 acts as the Nucleophile in catalysis. Residue asparagine 318 coordinates NAD(+).

It belongs to the glyceraldehyde-3-phosphate dehydrogenase family. In terms of assembly, homotetramer.

Its subcellular location is the cytoplasm. It carries out the reaction D-glyceraldehyde 3-phosphate + phosphate + NAD(+) = (2R)-3-phospho-glyceroyl phosphate + NADH + H(+). It participates in carbohydrate degradation; glycolysis; pyruvate from D-glyceraldehyde 3-phosphate: step 1/5. The chain is Glyceraldehyde-3-phosphate dehydrogenase 1 (gpd1) from Agaricus bisporus (White button mushroom).